A 458-amino-acid chain; its full sequence is MHDKTWSGRFNEPVSELVKQYTASIGFDRRLAEWDIQGSLAHAQMLKETGVLDEGDLADIRRGMAEILEEIRSGKIEWSSDLEDVHMNIERRLTDKIGDAGKRLHTGRSRNDQVATDIRLWLRDQITVIQSLIQSLQTALLDLAEQNAETVMPGFTHLQVAQPVSFGHHMLAYVEMLGRDNERMADCRRRVNRMPLGAAALAGTTYPIRREITAELLGFEQICQNSLDAVSDRDFAVEFTAAASLIMVHLSRLSEELILWMSPRFGFIDIADRFCTGSSIMPQKKNPDVPELVRGKSGRVIGHLIGLITLMKSQPLAYNKDNQEDKEPLFDTADTLIDTLRIYADMMRGVTVKPDNMRAAVMQGFATATDLADYLVKKGMPFRDAHEVVAQAVRHADEAGVDLSELPLEVLQGFSDLIADDVYGVLTPEGSLNARNHLGGSAPEQVRFQVKRWREMSA.

The protein belongs to the lyase 1 family. Argininosuccinate lyase subfamily.

It localises to the cytoplasm. It catalyses the reaction 2-(N(omega)-L-arginino)succinate = fumarate + L-arginine. It functions in the pathway amino-acid biosynthesis; L-arginine biosynthesis; L-arginine from L-ornithine and carbamoyl phosphate: step 3/3. In Neisseria meningitidis serogroup A / serotype 4A (strain DSM 15465 / Z2491), this protein is Argininosuccinate lyase.